Here is a 101-residue protein sequence, read N- to C-terminus: Urease subunit beta (101 aa).

This sequence belongs to the urease beta subunit family. In terms of assembly, heterotrimer of UreA (gamma), UreB (beta) and UreC (alpha) subunits. Three heterotrimers associate to form the active enzyme.

Its subcellular location is the cytoplasm. The enzyme catalyses urea + 2 H2O + H(+) = hydrogencarbonate + 2 NH4(+). Its pathway is nitrogen metabolism; urea degradation; CO(2) and NH(3) from urea (urease route): step 1/1. This is Urease subunit beta from Ectopseudomonas mendocina (strain ymp) (Pseudomonas mendocina).